The following is a 127-amino-acid chain: Large ribosomal subunit protein bL17 (127 aa).

This sequence belongs to the bacterial ribosomal protein bL17 family. Part of the 50S ribosomal subunit. Contacts protein L32.

In Xanthomonas axonopodis pv. citri (strain 306), this protein is Large ribosomal subunit protein bL17.